Here is a 229-residue protein sequence, read N- to C-terminus: Ribose-5-phosphate isomerase A (229 aa).

Substrate is bound by residues 28-31 (TGST), 84-87 (DGAD), and 97-100 (KGGG). Glutamate 106 serves as the catalytic Proton acceptor. Residue lysine 124 participates in substrate binding.

This sequence belongs to the ribose 5-phosphate isomerase family. Homodimer.

The catalysed reaction is aldehydo-D-ribose 5-phosphate = D-ribulose 5-phosphate. The protein operates within carbohydrate degradation; pentose phosphate pathway; D-ribose 5-phosphate from D-ribulose 5-phosphate (non-oxidative stage): step 1/1. Catalyzes the reversible conversion of ribose-5-phosphate to ribulose 5-phosphate. In Lacticaseibacillus paracasei (strain ATCC 334 / BCRC 17002 / CCUG 31169 / CIP 107868 / KCTC 3260 / NRRL B-441) (Lactobacillus paracasei), this protein is Ribose-5-phosphate isomerase A.